A 416-amino-acid chain; its full sequence is Glutamate dehydrogenase (416 aa).

K105 is an active-site residue.

The protein belongs to the Glu/Leu/Phe/Val dehydrogenases family. Homohexamer.

The catalysed reaction is L-glutamate + NAD(+) + H2O = 2-oxoglutarate + NH4(+) + NADH + H(+). The enzyme catalyses L-glutamate + NADP(+) + H2O = 2-oxoglutarate + NH4(+) + NADPH + H(+). This Thermotoga maritima (strain ATCC 43589 / DSM 3109 / JCM 10099 / NBRC 100826 / MSB8) protein is Glutamate dehydrogenase (gdhA).